The primary structure comprises 529 residues: UDP-glucuronosyltransferase 2B11 (529 aa).

Positions 1 to 21 (MTLKWTSVLLLIHLSCYFSSG) are cleaved as a signal peptide. Residue K135 is modified to N6-succinyllysine. N-linked (GlcNAc...) asparagine glycosylation is present at N315. A helical transmembrane segment spans residues 493-513 (VIGFLLACVATVIFIITKFCL).

Belongs to the UDP-glycosyltransferase family. In terms of tissue distribution, widely expressed.

Its subcellular location is the microsome membrane. It localises to the endoplasmic reticulum membrane. It catalyses the reaction glucuronate acceptor + UDP-alpha-D-glucuronate = acceptor beta-D-glucuronoside + UDP + H(+). Functionally, UDPGT is of major importance in the conjugation and subsequent elimination of potentially toxic xenobiotics and endogenous compounds. The chain is UDP-glucuronosyltransferase 2B11 (UGT2B11) from Homo sapiens (Human).